Reading from the N-terminus, the 212-residue chain is RNA chaperone ProQ (212 aa).

The tract at residues 114-149 (RIAKAGKTSAPAANAKKPVKKPVARRPKAAPSAKPV) is disordered. Low complexity predominate over residues 118 to 129 (AGKTSAPAANAK). Residues 130-141 (KPVKKPVARRPK) are compositionally biased toward basic residues.

The protein belongs to the ProQ family.

Its subcellular location is the cytoplasm. Functionally, RNA chaperone with significant RNA binding, RNA strand exchange and RNA duplexing activities. This Shewanella piezotolerans (strain WP3 / JCM 13877) protein is RNA chaperone ProQ.